The sequence spans 59 residues: Bacteriocin curvacin-A (59 aa).

The propeptide occupies 1–18; the sequence is MNNVKELSMTELQTITGG. A disulfide bridge links C28 with C33.

The protein belongs to the bacteriocin class IIA/YGNGV family.

Its subcellular location is the secreted. Bactericidal activity; inhibits closely related Lactobacilli, Listeria monocytogenes and ivanovvi, Enterococcus faecalis, Carnobacterium sp and Brocothrix thermosphacta. The sequence is that of Bacteriocin curvacin-A (curA) from Latilactobacillus curvatus (Lactobacillus curvatus).